Consider the following 180-residue polypeptide: Non-specific lipid transfer protein GPI-anchored 3 (180 aa).

A signal peptide spans 1 to 22; sequence MEAVRFAVAVVLVFCYVTSSNA. Disulfide bonds link C41–C78, C48–C62, C63–C104, and C76–C113. N-linked (GlcNAc...) asparagine glycosylation is found at N91 and N120. Composition is skewed to low complexity over residues 116–125 and 133–156; these read SAGTNSSSTP and PASSTSTGTGSGSTGNAAPSTAKP. The segment at 116–156 is disordered; the sequence is SAGTNSSSTPPATPKTPPASSTSTGTGSGSTGNAAPSTAKP. S158 carries the GPI-anchor amidated serine lipid modification. Positions 159–180 are cleaved as a propeptide — removed in mature form; the sequence is SAPAINFGGLSFASAVVATLFF.

This sequence belongs to the plant LTP family. Restricted to stamen, pollen and sporophytic tissues. Also detected, at low levels, in stems and leaves.

The protein resides in the cell membrane. Functionally, lipid transfer protein involved in seed and ovule maturation and development, probably by regulating the fatty acids homeostasis during suberin and sporopollenin biosynthesis or deposition. The sequence is that of Non-specific lipid transfer protein GPI-anchored 3 from Arabidopsis thaliana (Mouse-ear cress).